The sequence spans 565 residues: Sulfite reductase [NADPH] hemoprotein beta-component (565 aa).

[4Fe-4S] cluster is bound by residues C429, C435, C474, and C478. C478 is a siroheme binding site.

Belongs to the nitrite and sulfite reductase 4Fe-4S domain family. Alpha(8)-beta(8). The alpha component is a flavoprotein, the beta component is a hemoprotein. It depends on siroheme as a cofactor. [4Fe-4S] cluster is required as a cofactor.

It carries out the reaction hydrogen sulfide + 3 NADP(+) + 3 H2O = sulfite + 3 NADPH + 4 H(+). Its pathway is sulfur metabolism; hydrogen sulfide biosynthesis; hydrogen sulfide from sulfite (NADPH route): step 1/1. In terms of biological role, component of the sulfite reductase complex that catalyzes the 6-electron reduction of sulfite to sulfide. This is one of several activities required for the biosynthesis of L-cysteine from sulfate. The sequence is that of Sulfite reductase [NADPH] hemoprotein beta-component from Shewanella pealeana (strain ATCC 700345 / ANG-SQ1).